The primary structure comprises 273 residues: Imidazole glycerol phosphate synthase subunit HisF (273 aa).

Residues D11 and D134 contribute to the active site.

Belongs to the HisA/HisF family. As to quaternary structure, heterodimer of HisH and HisF.

It localises to the cytoplasm. It catalyses the reaction 5-[(5-phospho-1-deoxy-D-ribulos-1-ylimino)methylamino]-1-(5-phospho-beta-D-ribosyl)imidazole-4-carboxamide + L-glutamine = D-erythro-1-(imidazol-4-yl)glycerol 3-phosphate + 5-amino-1-(5-phospho-beta-D-ribosyl)imidazole-4-carboxamide + L-glutamate + H(+). It participates in amino-acid biosynthesis; L-histidine biosynthesis; L-histidine from 5-phospho-alpha-D-ribose 1-diphosphate: step 5/9. IGPS catalyzes the conversion of PRFAR and glutamine to IGP, AICAR and glutamate. The HisF subunit catalyzes the cyclization activity that produces IGP and AICAR from PRFAR using the ammonia provided by the HisH subunit. This Methanococcoides burtonii (strain DSM 6242 / NBRC 107633 / OCM 468 / ACE-M) protein is Imidazole glycerol phosphate synthase subunit HisF.